A 415-amino-acid polypeptide reads, in one-letter code: tRNA(Met) cytidine acetate ligase (415 aa).

ATP is bound by residues 7–20 (VVEY…HRYH), Gly-101, Asn-162, and 187–188 (RI).

It belongs to the TmcAL family.

It is found in the cytoplasm. It catalyses the reaction cytidine(34) in elongator tRNA(Met) + acetate + ATP = N(4)-acetylcytidine(34) in elongator tRNA(Met) + AMP + diphosphate. In terms of biological role, catalyzes the formation of N(4)-acetylcytidine (ac(4)C) at the wobble position of elongator tRNA(Met), using acetate and ATP as substrates. First activates an acetate ion to form acetyladenylate (Ac-AMP) and then transfers the acetyl group to tRNA to form ac(4)C34. The protein is tRNA(Met) cytidine acetate ligase of Bacillus velezensis (strain DSM 23117 / BGSC 10A6 / LMG 26770 / FZB42) (Bacillus amyloliquefaciens subsp. plantarum).